We begin with the raw amino-acid sequence, 537 residues long: 2-succinyl-5-enolpyruvyl-6-hydroxy-3-cyclohexene-1-carboxylate synthase (537 aa).

It belongs to the TPP enzyme family. MenD subfamily. In terms of assembly, homodimer. It depends on Mg(2+) as a cofactor. Mn(2+) serves as cofactor. The cofactor is thiamine diphosphate.

It catalyses the reaction isochorismate + 2-oxoglutarate + H(+) = 5-enolpyruvoyl-6-hydroxy-2-succinyl-cyclohex-3-ene-1-carboxylate + CO2. It participates in quinol/quinone metabolism; 1,4-dihydroxy-2-naphthoate biosynthesis; 1,4-dihydroxy-2-naphthoate from chorismate: step 2/7. The protein operates within quinol/quinone metabolism; menaquinone biosynthesis. In terms of biological role, catalyzes the thiamine diphosphate-dependent decarboxylation of 2-oxoglutarate and the subsequent addition of the resulting succinic semialdehyde-thiamine pyrophosphate anion to isochorismate to yield 2-succinyl-5-enolpyruvyl-6-hydroxy-3-cyclohexene-1-carboxylate (SEPHCHC). This is 2-succinyl-5-enolpyruvyl-6-hydroxy-3-cyclohexene-1-carboxylate synthase from Desulfotalea psychrophila (strain LSv54 / DSM 12343).